Reading from the N-terminus, the 153-residue chain is Small ribosomal subunit protein uS13 (153 aa).

The segment at Val132–Lys153 is disordered. Residues Gln135–Lys153 show a composition bias toward basic residues.

It belongs to the universal ribosomal protein uS13 family. As to quaternary structure, part of the 30S ribosomal subunit. Forms a loose heterodimer with protein S19. Forms two bridges to the 50S subunit in the 70S ribosome.

Located at the top of the head of the 30S subunit, it contacts several helices of the 16S rRNA. In the 70S ribosome it contacts the 23S rRNA (bridge B1a) and protein L5 of the 50S subunit (bridge B1b), connecting the 2 subunits; these bridges are implicated in subunit movement. This chain is Small ribosomal subunit protein uS13, found in Nanoarchaeum equitans (strain Kin4-M).